The sequence spans 461 residues: Transcriptional activator RocR (461 aa).

The residue at position 57 (Asp57) is a 4-aspartylphosphate. A Sigma-54 factor interaction domain is found at 143–372 (ILGTSPAIQD…EHMIEGAMNF (230 aa)). Residues 171–178 (GETGTGKE) and 233–242 (AHGGTLLLDE) each bind ATP. A DNA-binding region (H-T-H motif) is located at residues 434–453 (ISKAAQELGISRQSLQYRLK).

In terms of biological role, positive regulator of arginine catabolism. Controls the transcription of the two operons rocABC and rocDEF and probably acts by binding to the corresponding upstream activating sequences. The sequence is that of Transcriptional activator RocR (rocR) from Bacillus subtilis (strain 168).